A 558-amino-acid chain; its full sequence is Atlastin-1 (558 aa).

Residues 1–29 (MAKSRRDRNSWGGFSEKSSDWSSEEEEPV) are disordered. The segment at 1–34 (MAKSRRDRNSWGGFSEKSSDWSSEEEEPVRKAGP) is N-terminal hypervariable region (HVR). The Cytoplasmic portion of the chain corresponds to 1-449 (MAKSRRDRNS…NIFHAARTPA (449 aa)). A phosphoserine mark is found at Ser-10, Ser-22, and Ser-23. The GB1/RHD3-type G domain maps to 64-309 (DKEVVAVSVA…LIPWLLSPES (246 aa)). GDP contacts are provided by Arg-77, Lys-78, Gly-79, Lys-80, Ser-81, Phe-82, Gln-148, Arg-217, Asp-218, Val-276, and Asn-279. GTP-binding residues include Arg-77, Lys-78, Gly-79, Lys-80, Ser-81, and Phe-82. Ser-81 contacts Mg(2+). Residues Arg-217, Asp-218, and Val-276 each coordinate GTP. A 3HB (three-helix bundle) domain region spans residues 347–438 (MLQATAEANN…YIQYIKHNDS (92 aa)). Position 395 is an N6-acetyllysine (Lys-395). The stretch at 412 to 439 (EFSRRYLQQLESEIDELYIQYIKHNDSK) forms a coiled coil. Residues 439-447 (KNIFHAART) form a linker region. The chain crosses the membrane as a helical span at residues 450–470 (TLFVVIFITYVIAGVTGFIGL). Asp-471 is a topological domain (lumenal). Residues 472–492 (IIASLCNMIMGLTLITLCTWA) traverse the membrane as a helical segment. Residues 493–558 (YIRYSGEYRE…PTEQPEKKKI (66 aa)) lie on the Cytoplasmic side of the membrane. Positions 521 to 558 (NEALYKLYSAAATHRHLYQQAFPAPKSEPTEQPEKKKI) are autoinhibitory domain.

The protein belongs to the TRAFAC class dynamin-like GTPase superfamily. GB1/RHD3 GTPase family. GB1 subfamily. In terms of assembly, monomeric and homodimeric. The homodimer, transiently formed by two molecules on opposing membranes, is the active form mediating ER membrane fusion. Interacts with REEP1, REEP5, RTN3 and RTN4 (via the transmembrane region); these proteins are involved in endoplasmic reticulum tubular network organization. Interacts with ZFYVE27; both proteins are involved in endoplasmic reticulum tubular network organization. Interacts with ARL6IP1; both proteins are involved in endoplasmic reticulum tubular network organization. Interacts with SPAST; the interaction is direct, could recruit SPAST to Golgi membranes. Interacts (via N-terminal region) with MAP4K4 (via CNH regulatory domain). May interact with TMED2. Interacts with CPT1C. Post-translationally, phosphorylated. Phosphorylation, by different kinases, of the N-terminal hypervariable region (HVR) regulates the ATL1-mediated membrane tethering step. Detected in brain where it is abundant in lamina V of the cerebral cortex. Also expressed within the hippocampus, mainly in pyramidal neurons in CA1 and CA3. Weakly expressed in the striatum and more robustly in amygdala and several thalamic nuclei. Also detected in several mesopontine nuclei (at protein level).

It is found in the endoplasmic reticulum membrane. The protein localises to the golgi apparatus membrane. The protein resides in the cell projection. It localises to the axon. It catalyses the reaction GTP + H2O = GDP + phosphate + H(+). Its function is as follows. Atlastin-1 (ATL1) is a membrane-anchored GTPase that mediates the GTP-dependent fusion of endoplasmic reticulum (ER) membranes, maintaining the continuous ER network. It facilitates the formation of three-way junctions where ER tubules intersect. Two atlastin-1 on neighboring ER tubules bind GTP and form loose homodimers through the GB1/RHD3-type G domains and 3HB regions. Upon GTP hydrolysis, the 3HB regions tighten, pulling the membranes together to drive their fusion. After fusion, the homodimer disassembles upon release of inorganic phosphate (Pi). Subsequently, GDP dissociates, resetting the monomers to a conformation ready for a new fusion cycle. May also regulate more or less directly Golgi biogenesis. Indirectly regulates axonal development. The chain is Atlastin-1 from Rattus norvegicus (Rat).